A 112-amino-acid polypeptide reads, in one-letter code: Protein ORF3 (112 aa).

Hydrophobic regions lie at residues 7–23 (ALGL…LCCP) and 40–60 (AAVV…PIFI). Positions 28–66 (VSRLAVAAGKRGAAVVSGVTGLILSPSPSPIFIQPTPSH) are interaction with host HPX. Positions 70–112 (QPPPGLELALGSQSVHSAPLGVTSPSAPPLPPVVDLPQLGLRR) are homodimerization, and interaction with host AMBP/bikunin. Residues 89-112 (LGVTSPSAPPLPPVVDLPQLGLRR) form a disordered region. Residues 93–102 (SPSAPPLPPV) form an interaction with host SRC, HCK, FYN, PIK3R3 and GRB2 region. Positions 94 to 97 (PSAP) match the PTAP/PSAP motif motif.

This sequence belongs to the hepevirus ORF3 protein family. Forms homooligomers. Interacts with host SRC, HCK, FYN, PIK3R3 and GRB2 (via SH3 domain); binding does not activate the kinases. Interacts with host AMBP/bikunin and AMBP/alpha-1-microglobulin peptides. Interacts with host HPX/hemopexin. Interacts (when phosphorylated) with capsid protein ORF2. Interacts with host TSG101; this interaction plays a role in viral release from the host cell. Interacts with host SIRPA; this interaction down-regulates the phosphorylation of host IRF3. In terms of processing, palmitoylated in the N-terminus.

The protein resides in the host endoplasmic reticulum membrane. It localises to the host cytoplasm. It is found in the host cytoskeleton. The protein localises to the virion. Its subcellular location is the host cell membrane. In terms of biological role, small multifunctional phosphoprotein involved in virion morphogenesis, egress and counteracting host innate immunity. Plays critical roles in the final steps of viral release by interacting with host TSG101, a member of the vacuolar protein-sorting pathway and using other cellular host proteins involved in vesicle formation pathway. Also acts as a viroporin and forms ion conductive pores allowing viral particle release. Impairs the generation of type I interferon by down-regulating host TLR3 and TLR7 as well as their downstream signaling pathways. Down-regulates the phosphorylation of host IRF3 via the interaction with host SIRP-alpha, thereby inhibiting IFN-I expression. Interacts with host microtubules. The sequence is that of Protein ORF3 from Bandicota bengalensis (lesser bandicoot rat).